The sequence spans 102 residues: uncharacterized protein (102 aa).

The next 3 helical transmembrane spans lie at 1–21, 42–62, and 68–88; these read MVPL…LRPV, SIID…LILV, and SIHA…FSIV.

It is found in the membrane. This is an uncharacterized protein from Saccharomyces cerevisiae (strain ATCC 204508 / S288c) (Baker's yeast).